The chain runs to 1724 residues: Sperm flagellar protein 2 (1724 aa).

The 105-residue stretch at 1–105 folds into the Calponin-homology (CH) domain; sequence MSEILCQWLN…LLYQLYIALQ (105 aa). 2 coiled-coil regions span residues 170–203 and 255–351; these read KAIE…KDLQ and RRLL…REKE. Residues 545-576 form a disordered region; that stretch reads HERQKSGKTPPTQEDDKRDPVVNQEKVSKTQD. Residues 558–576 are compositionally biased toward basic and acidic residues; that stretch reads EDDKRDPVVNQEKVSKTQD. Residues 665–691 are a coiled coil; that stretch reads NQAKLLEEALTGYKRKFLQLKKKKEQM. A disordered region spans residues 828–910; sequence EEKETEKKAG…PTAPPPPKAG (83 aa). Positions 853-862 are enriched in basic and acidic residues; the sequence is EAEKDKELHQ. Residues 995–1021 adopt a coiled-coil conformation; it reads EDLWEDEETKAELHQRVNDLRDRLWDI. Residues 1177 to 1194 show a composition bias toward basic and acidic residues; the sequence is RLTEEEKEPPQLDSKEKS. Disordered regions lie at residues 1177–1241, 1580–1618, and 1704–1724; these read RLTE…EMAE, VSPI…NANT, and SEHA…DEKK. The span at 1210-1221 shows a compositional bias: basic residues; sequence PKKKKTDKKGKG. Residues 1228–1580 are interaction with IFT20; sequence EVSPVTVTPE…MAEKTSISTV (353 aa). Residues 1592–1607 show a composition bias toward basic and acidic residues; it reads SSAKEDRELKEEKDDQ.

In terms of assembly, interacts (via C-terminus) with IFT20. Interacts with DYNC1I2. In terms of tissue distribution, highly expressed in testis, where it primarily localizes to late spermatocytes, round spermatids and elongating spermatids (at protein level). Found in Sertoli cells of the testis (at protein level). Expressed at lower levels in epididymis (at protein level). Detected in lung, brain, liver and kidney. Also detected in bone, cartilage, trachea, pituitary gland and eye. Expressed in osteoblasts and chondrocytes.

It localises to the cell projection. Its subcellular location is the cilium. It is found in the flagellum. The protein resides in the cytoplasm. The protein localises to the cytoskeleton. It localises to the golgi apparatus. Required for correct axoneme development in spermatozoa. Important for normal development of the manchette and sperm head morphology. Essential for male fertility. Plays a role in localization of the intraflagellar transport protein IFT20 to the manchette, suggesting function as an adapter for dynein-mediated protein transport during spermatogenesis. Also plays a role in bone growth where it seems to be required for normal osteoblast differentiation. This Mus musculus (Mouse) protein is Sperm flagellar protein 2 (Spef2).